A 128-amino-acid polypeptide reads, in one-letter code: Entry-fusion complex protein OPG094 (128 aa).

The Intravirion portion of the chain corresponds to 1–30; sequence MENVPNVYFNPVFIEPTFKHSLLSVYKHRL. The chain crosses the membrane as a helical; Signal-anchor for type III membrane protein span at residues 31 to 51; the sequence is IVLFEVFIVFILIYVFFRSEL. Residues 52–107 lie on the Virion surface side of the membrane; sequence NMFFMPKRKIPDPIDRLRRANLACEDDKLMIYGLPWMTTQTSALSINSKPIVYKDC. The cysteines at positions 75 and 107 are disulfide-linked.

It belongs to the orthopoxvirus OPG099 family. Interacts with OPG086. Component of the entry fusion complex (EFC) composed of OPG053, OPG076, OPG086, OPG094, OPG095, OPG099, OPG107, OPG143, OPG104J5, OPG147 and OPG155. Except for OPG095 and OPG053, each of the EFC proteins is required for assembly or stability of the complex. Most cysteines are linked by disulfide bonds. They are created by the viral disulfide bond formation pathway, a poxvirus-specific redox pathway that operates on the cytoplasmic side of the MV membranes. In terms of processing, unglycosylated because produced in viral factories instead of the classic ER -Golgi route.

Its subcellular location is the virion membrane. In terms of biological role, component of the entry fusion complex (EFC), which consists of 11 proteins. During cell infection, this complex mediates entry of the virion core into the host cytoplasm by a two-step mechanism consisting of lipid mixing of the viral and cellular membranes and subsequent pore formation. This is Entry-fusion complex protein OPG094 (OPG099) from Vaccinia virus (strain Ankara) (VACV).